The sequence spans 1011 residues: RAS protein activator like-3 (1011 aa).

A disordered region spans residues 1–38 (MDPPSPSRTSQTQPTATSPLTSYRWHTGGGGEKAAGGF). Low complexity predominate over residues 7 to 22 (SRTSQTQPTATSPLTS). Phosphoserine is present on residues Ser-18 and Ser-51. Disordered stretches follow at residues 52–136 (HQEP…PVWD), 151–197 (GGEE…GPNQ), and 209–230 (KEKK…GSRE). Residues 81–95 (SRLRLSKALWGRHKN) show a composition bias toward basic residues. The segment covering 100 to 117 (PDPEPEQEAPELEPEPEL) has biased composition (acidic residues). Pro residues predominate over residues 118-131 (EPPTPQIPEAPTPN). Phosphoserine is present on residues Ser-164, Ser-166, Ser-167, and Ser-170. Residues 179–190 (RDPDRMPGKTEP) show a composition bias toward basic and acidic residues. One can recognise a PH domain in the interval 197-293 (QVHNVRGLLK…WIEDLRRQFQ (97 aa)). Phosphoserine is present on residues Ser-224, Ser-228, and Ser-231. Position 234 is a phosphothreonine (Thr-234). Residues 284 to 404 (WIEDLRRQFQ…APAAGLERWF (121 aa)) form the C2 domain. The region spanning 474 to 682 (GRAQALVTDL…PAMQCFLDQV (209 aa)) is the Ras-GAP domain. Disordered regions lie at residues 756 to 885 (QVHS…LGTH) and 987 to 1011 (LSPR…GDTT). 2 positions are modified to phosphoserine: Ser-787 and Ser-790. A compositionally biased stretch (basic and acidic residues) spans 792-808 (RRSESWARPRPDEERPL). Polar residues-rich tracts occupy residues 871–882 (QMDQPQDRNQAL) and 987–999 (LSPR…SQPQ). A coiled-coil region spans residues 888–988 (VNKLAELQCE…RDAVQSLQLS (101 aa)). Ser-988 carries the post-translational modification Phosphoserine.

Predominantly expressed in cells of hematopoietic lineages.

It is found in the cytoplasm. It localises to the cell cortex. Its function is as follows. Functions as a Ras GTPase-activating protein. Plays an important role in the expansion and functions of natural killer T (NKT) cells in the liver by negatively regulating RAS activity and the down-stream ERK signaling pathway. This is RAS protein activator like-3 (RASAL3) from Homo sapiens (Human).